The following is a 352-amino-acid chain: Deoxyhypusine synthase-like protein (352 aa).

It belongs to the deoxyhypusine synthase family.

The polypeptide is Deoxyhypusine synthase-like protein (Coxiella burnetii (strain Dugway 5J108-111)).